A 418-amino-acid chain; its full sequence is UDP-N-acetylglucosamine 1-carboxyvinyltransferase (418 aa).

22-23 (KN) provides a ligand contact to phosphoenolpyruvate. Arg-91 is a UDP-N-acetyl-alpha-D-glucosamine binding site. Residue Cys-115 is the Proton donor of the active site. At Cys-115 the chain carries 2-(S-cysteinyl)pyruvic acid O-phosphothioketal. UDP-N-acetyl-alpha-D-glucosamine is bound by residues 120–124 (RPVDL), 160–163 (KVSV), Asp-305, and Ile-327.

Belongs to the EPSP synthase family. MurA subfamily.

It localises to the cytoplasm. It carries out the reaction phosphoenolpyruvate + UDP-N-acetyl-alpha-D-glucosamine = UDP-N-acetyl-3-O-(1-carboxyvinyl)-alpha-D-glucosamine + phosphate. Its pathway is cell wall biogenesis; peptidoglycan biosynthesis. Its function is as follows. Cell wall formation. Adds enolpyruvyl to UDP-N-acetylglucosamine. This is UDP-N-acetylglucosamine 1-carboxyvinyltransferase from Baumannia cicadellinicola subsp. Homalodisca coagulata.